The sequence spans 500 residues: Probable cytosol aminopeptidase (500 aa).

Mn(2+) contacts are provided by Lys-264 and Asp-269. Residue Lys-276 is part of the active site. The Mn(2+) site is built by Asp-287, Asp-346, and Glu-348. Arg-350 is an active-site residue.

Belongs to the peptidase M17 family. It depends on Mn(2+) as a cofactor.

The protein resides in the cytoplasm. It catalyses the reaction Release of an N-terminal amino acid, Xaa-|-Yaa-, in which Xaa is preferably Leu, but may be other amino acids including Pro although not Arg or Lys, and Yaa may be Pro. Amino acid amides and methyl esters are also readily hydrolyzed, but rates on arylamides are exceedingly low.. It carries out the reaction Release of an N-terminal amino acid, preferentially leucine, but not glutamic or aspartic acids.. Its function is as follows. Presumably involved in the processing and regular turnover of intracellular proteins. Catalyzes the removal of unsubstituted N-terminal amino acids from various peptides. The chain is Probable cytosol aminopeptidase from Afipia carboxidovorans (strain ATCC 49405 / DSM 1227 / KCTC 32145 / OM5) (Oligotropha carboxidovorans).